The chain runs to 301 residues: UDP-3-O-acyl-N-acetylglucosamine deacetylase (301 aa).

3 residues coordinate Zn(2+): His81, His237, and Asp241. Residue His264 is the Proton donor of the active site.

It belongs to the LpxC family. Requires Zn(2+) as cofactor.

The catalysed reaction is a UDP-3-O-[(3R)-3-hydroxyacyl]-N-acetyl-alpha-D-glucosamine + H2O = a UDP-3-O-[(3R)-3-hydroxyacyl]-alpha-D-glucosamine + acetate. The protein operates within glycolipid biosynthesis; lipid IV(A) biosynthesis; lipid IV(A) from (3R)-3-hydroxytetradecanoyl-[acyl-carrier-protein] and UDP-N-acetyl-alpha-D-glucosamine: step 2/6. Catalyzes the hydrolysis of UDP-3-O-myristoyl-N-acetylglucosamine to form UDP-3-O-myristoylglucosamine and acetate, the committed step in lipid A biosynthesis. This is UDP-3-O-acyl-N-acetylglucosamine deacetylase from Leptospira interrogans serogroup Icterohaemorrhagiae serovar copenhageni (strain Fiocruz L1-130).